The primary structure comprises 114 residues: Putative pterin-4-alpha-carbinolamine dehydratase (114 aa).

Belongs to the pterin-4-alpha-carbinolamine dehydratase family.

It carries out the reaction (4aS,6R)-4a-hydroxy-L-erythro-5,6,7,8-tetrahydrobiopterin = (6R)-L-erythro-6,7-dihydrobiopterin + H2O. The chain is Putative pterin-4-alpha-carbinolamine dehydratase from Pseudoalteromonas translucida (strain TAC 125).